Consider the following 390-residue polypeptide: MTQKIIIFDTTLRDGEQSLKMSLSVKKKLKIAFALEKLGVDVIEAGFPISSPGDFESVKKISERIKDAKICSLARCIDGDIDIAAKAMKKANSFRIHIFLGTSALHVQSKLKKTFDQIIDMMVSSVKRAQKYTDDVEFSCEDAGRTSLDDLCRIIELAIDLGVKTINIPDTVGYTIPYEFSNIISSIYKKVPNIDKAIISVHCHDDLGMAVANSISAIQVGARQIEGTITGVGERAGNAALEEILMAIKIRKDILNFKTNIKYQEIYSTCRVISSICNIPVPVNKAIIGSNAFSHSSGIHQDGILKDKKTYEIIVPESIGFVSQPLNLTSRSGRAAVKYRMKKIGYKDSDYNIDILYSRFLKLADKKGRVSDSDLKQLVCFNNKLKNLKD.

The Pyruvate carboxyltransferase domain occupies 5–267 (IIIFDTTLRD…KTNIKYQEIY (263 aa)). Residues Asp14, His202, His204, and Asn238 each coordinate Mn(2+).

Belongs to the alpha-IPM synthase/homocitrate synthase family. LeuA type 1 subfamily. In terms of assembly, homodimer. Mn(2+) serves as cofactor.

It is found in the cytoplasm. It catalyses the reaction 3-methyl-2-oxobutanoate + acetyl-CoA + H2O = (2S)-2-isopropylmalate + CoA + H(+). It functions in the pathway amino-acid biosynthesis; L-leucine biosynthesis; L-leucine from 3-methyl-2-oxobutanoate: step 1/4. Its function is as follows. Catalyzes the condensation of the acetyl group of acetyl-CoA with 3-methyl-2-oxobutanoate (2-ketoisovalerate) to form 3-carboxy-3-hydroxy-4-methylpentanoate (2-isopropylmalate). The chain is Putative 2-isopropylmalate synthase from Buchnera aphidicola subsp. Baizongia pistaciae (strain Bp).